A 119-amino-acid polypeptide reads, in one-letter code: Holo-[acyl-carrier-protein] synthase (119 aa).

Residues aspartate 8 and glutamate 59 each contribute to the Mg(2+) site.

It belongs to the P-Pant transferase superfamily. AcpS family. The cofactor is Mg(2+).

The protein resides in the cytoplasm. It carries out the reaction apo-[ACP] + CoA = holo-[ACP] + adenosine 3',5'-bisphosphate + H(+). Functionally, transfers the 4'-phosphopantetheine moiety from coenzyme A to a Ser of acyl-carrier-protein. The protein is Holo-[acyl-carrier-protein] synthase of Staphylococcus aureus (strain USA300).